Consider the following 48-residue polypeptide: uncharacterized protein (48 aa).

This is an uncharacterized protein from Acidianus hospitalis (AFV-1).